The chain runs to 597 residues: Arginine--tRNA ligase (597 aa).

The 'HIGH' region signature appears at 125-135 (PNTNKPLHLGH).

This sequence belongs to the class-I aminoacyl-tRNA synthetase family. As to quaternary structure, monomer.

Its subcellular location is the cytoplasm. It carries out the reaction tRNA(Arg) + L-arginine + ATP = L-arginyl-tRNA(Arg) + AMP + diphosphate. This chain is Arginine--tRNA ligase, found in Porphyromonas gingivalis (strain ATCC BAA-308 / W83).